The chain runs to 558 residues: Atlastin-1 (558 aa).

The tract at residues M1–E27 is disordered. Positions M1–P34 are N-terminal hypervariable region (HVR). Residues M1–A449 are Cytoplasmic-facing. 3 positions are modified to phosphoserine: S10, S22, and S23. Positions D64–S309 constitute a GB1/RHD3-type G domain. GDP-binding residues include R77, K78, G79, K80, S81, F82, Q148, R217, D218, V276, and N279. Residues R77, K78, G79, K80, S81, and F82 each coordinate GTP. Residue S81 coordinates Mg(2+). The GTP site is built by R217, D218, and V276. A 3HB (three-helix bundle) domain region spans residues M347 to S438. An N6-acetyllysine modification is found at K395. A coiled-coil region spans residues E412–K439. Residues K439 to T447 are linker. The chain crosses the membrane as a helical span at residues T450–L470. Residue D471 is a topological domain, lumenal. Residues I472 to A492 form a helical membrane-spanning segment. Residues Y493–M558 are Cytoplasmic-facing. An autoinhibitory domain region spans residues N521–M558.

This sequence belongs to the TRAFAC class dynamin-like GTPase superfamily. GB1/RHD3 GTPase family. GB1 subfamily. In terms of assembly, monomeric and homodimeric. The homodimer, transiently formed by two molecules on opposing membranes, is the active form mediating ER membrane fusion. Interacts with REEP1, REEP5, RTN3 and RTN4 (via the transmembrane region); these proteins are involved in endoplasmic reticulum tubular network organization. Interacts with ZFYVE27; both proteins are involved in endoplasmic reticulum tubular network organization. Interacts with ARL6IP1; both proteins are involved in endoplasmic reticulum tubular network organization. Interacts with SPAST; the interaction is direct, could recruit SPAST to Golgi membranes. Interacts (via N-terminal region) with MAP4K4 (via CNH regulatory domain). May interact with TMED2. Interacts with CPT1C. Phosphorylated. Phosphorylation, by different kinases, of the N-terminal hypervariable region (HVR) regulates the ATL1-mediated membrane tethering step.

Its subcellular location is the endoplasmic reticulum membrane. The protein localises to the golgi apparatus membrane. The protein resides in the cell projection. It is found in the axon. The enzyme catalyses GTP + H2O = GDP + phosphate + H(+). In terms of biological role, atlastin-1 (ATL1) is a membrane-anchored GTPase that mediates the GTP-dependent fusion of endoplasmic reticulum (ER) membranes, maintaining the continuous ER network. It facilitates the formation of three-way junctions where ER tubules intersect. Two atlastin-1 on neighboring ER tubules bind GTP and form loose homodimers through the GB1/RHD3-type G domains and 3HB regions. Upon GTP hydrolysis, the 3HB regions tighten, pulling the membranes together to drive their fusion. After fusion, the homodimer disassembles upon release of inorganic phosphate (Pi). Subsequently, GDP dissociates, resetting the monomers to a conformation ready for a new fusion cycle. May also regulate more or less directly Golgi biogenesis. Indirectly regulates axonal development. In Macaca fascicularis (Crab-eating macaque), this protein is Atlastin-1.